Reading from the N-terminus, the 308-residue chain is Aspartate carbamoyltransferase catalytic subunit (308 aa).

Carbamoyl phosphate-binding residues include Arg59 and Thr60. Lys87 is a binding site for L-aspartate. Positions 109, 137, and 140 each coordinate carbamoyl phosphate. L-aspartate contacts are provided by Arg170 and Arg224. Gly265 and Pro266 together coordinate carbamoyl phosphate.

It belongs to the aspartate/ornithine carbamoyltransferase superfamily. ATCase family. In terms of assembly, heterododecamer (2C3:3R2) of six catalytic PyrB chains organized as two trimers (C3), and six regulatory PyrI chains organized as three dimers (R2).

It carries out the reaction carbamoyl phosphate + L-aspartate = N-carbamoyl-L-aspartate + phosphate + H(+). The protein operates within pyrimidine metabolism; UMP biosynthesis via de novo pathway; (S)-dihydroorotate from bicarbonate: step 2/3. Catalyzes the condensation of carbamoyl phosphate and aspartate to form carbamoyl aspartate and inorganic phosphate, the committed step in the de novo pyrimidine nucleotide biosynthesis pathway. The protein is Aspartate carbamoyltransferase catalytic subunit of Flavobacterium johnsoniae (strain ATCC 17061 / DSM 2064 / JCM 8514 / BCRC 14874 / CCUG 350202 / NBRC 14942 / NCIMB 11054 / UW101) (Cytophaga johnsonae).